Consider the following 336-residue polypeptide: Galactose/methyl galactoside import permease protein MglC (336 aa).

The next 9 helical transmembrane spans lie at 17 to 37 (GIYV…PTFL), 53 to 73 (IIIA…LSAG), 107 to 127 (LVIL…GIII), 128 to 148 (AYLN…VYGI), 181 to 201 (FRLS…WVLW), 227 to 247 (VALN…FGGL), 257 to 277 (TNNL…VGGV), 279 to 299 (FSGG…FTVI), and 306 to 326 (IGVN…FAVA).

It belongs to the binding-protein-dependent transport system permease family. AraH/RbsC subfamily. As to quaternary structure, the complex is composed of one ATP-binding protein (MglA), two transmembrane proteins (MglC) and a solute-binding protein (MglB).

The protein resides in the cell inner membrane. Functionally, part of the ABC transporter complex MglABC involved in galactose/methyl galactoside import. Probably responsible for the translocation of the substrate across the membrane. This Salmonella typhimurium (strain LT2 / SGSC1412 / ATCC 700720) protein is Galactose/methyl galactoside import permease protein MglC (mglC).